Here is a 186-residue protein sequence, read N- to C-terminus: Crossover junction endodeoxyribonuclease RuvC (186 aa).

Catalysis depends on residues D7, E73, and D145. Residues D7, E73, and D145 each contribute to the Mg(2+) site.

Belongs to the RuvC family. Homodimer which binds Holliday junction (HJ) DNA. The HJ becomes 2-fold symmetrical on binding to RuvC with unstacked arms; it has a different conformation from HJ DNA in complex with RuvA. In the full resolvosome a probable DNA-RuvA(4)-RuvB(12)-RuvC(2) complex forms which resolves the HJ. Requires Mg(2+) as cofactor.

The protein localises to the cytoplasm. The catalysed reaction is Endonucleolytic cleavage at a junction such as a reciprocal single-stranded crossover between two homologous DNA duplexes (Holliday junction).. In terms of biological role, the RuvA-RuvB-RuvC complex processes Holliday junction (HJ) DNA during genetic recombination and DNA repair. Endonuclease that resolves HJ intermediates. Cleaves cruciform DNA by making single-stranded nicks across the HJ at symmetrical positions within the homologous arms, yielding a 5'-phosphate and a 3'-hydroxyl group; requires a central core of homology in the junction. The consensus cleavage sequence is 5'-(A/T)TT(C/G)-3'. Cleavage occurs on the 3'-side of the TT dinucleotide at the point of strand exchange. HJ branch migration catalyzed by RuvA-RuvB allows RuvC to scan DNA until it finds its consensus sequence, where it cleaves and resolves the cruciform DNA. This is Crossover junction endodeoxyribonuclease RuvC from Acidovorax sp. (strain JS42).